Consider the following 622-residue polypeptide: Serine/threonine-protein kinase MAK (622 aa).

Positions 4–284 constitute a Protein kinase domain; the sequence is YTTMKQLGDG…ASQALKHPYF (281 aa). Residues 10–18 and Lys-33 contribute to the ATP site; that span reads LGDGTYGSV. The active-site Proton acceptor is Asp-125. Position 157 is a phosphothreonine; by autocatalysis (Thr-157). A Phosphotyrosine; by autocatalysis modification is found at Tyr-159. A disordered region spans residues 301-371; the sequence is QTLHKQLQPL…QGHQKPPQTM (71 aa). Residues 336-355 show a composition bias toward polar residues; it reads QPKQGHQPLQTIQPPQNTVT.

This sequence belongs to the protein kinase superfamily. CMGC Ser/Thr protein kinase family. CDC2/CDKX subfamily. In terms of assembly, interacts with AR and CDK20. Found in a complex containing MAK, AR and NCOA3. Interacts with FZR1 (via WD repeats). Interacts with RP1. Mg(2+) is required as a cofactor. In terms of processing, autophosphorylated. Phosphorylated on serine and threonine residues. In pre- and postmeiotic male germ cells in testis. In photoreceptor cells of the retina and in the olfactory receptors, and in certain epithelia of the respiratory tract and choroid plexus (brain).

It localises to the nucleus. The protein resides in the cytoplasm. It is found in the cytoskeleton. The protein localises to the microtubule organizing center. Its subcellular location is the centrosome. It localises to the spindle. The protein resides in the midbody. It is found in the cell projection. The protein localises to the cilium. Its subcellular location is the photoreceptor outer segment. It localises to the photoreceptor inner segment. The enzyme catalyses L-seryl-[protein] + ATP = O-phospho-L-seryl-[protein] + ADP + H(+). The catalysed reaction is L-threonyl-[protein] + ATP = O-phospho-L-threonyl-[protein] + ADP + H(+). In terms of biological role, essential for the regulation of ciliary length and required for the long-term survival of photoreceptors. Could have an important function in sensory cells and in spermatogenesis. May participate in signaling pathways used in visual and olfactory sensory transduction. Phosphorylates FZR1 in a cell cycle-dependent manner. Plays a role in the transcriptional coactivation of AR. The chain is Serine/threonine-protein kinase MAK (Mak) from Mus musculus (Mouse).